Here is a 439-residue protein sequence, read N- to C-terminus: Xaa-Pro dipeptidase (439 aa).

Positions 244, 255, 335, 380, and 419 each coordinate Mn(2+).

It belongs to the peptidase M24B family. Bacterial-type prolidase subfamily. Requires Mn(2+) as cofactor.

It carries out the reaction Xaa-L-Pro dipeptide + H2O = an L-alpha-amino acid + L-proline. Its function is as follows. Splits dipeptides with a prolyl residue in the C-terminal position. The sequence is that of Xaa-Pro dipeptidase from Shewanella amazonensis (strain ATCC BAA-1098 / SB2B).